Here is a 564-residue protein sequence, read N- to C-terminus: Proline--tRNA ligase (564 aa).

This sequence belongs to the class-II aminoacyl-tRNA synthetase family. ProS type 1 subfamily. Homodimer.

It is found in the cytoplasm. It catalyses the reaction tRNA(Pro) + L-proline + ATP = L-prolyl-tRNA(Pro) + AMP + diphosphate. Functionally, catalyzes the attachment of proline to tRNA(Pro) in a two-step reaction: proline is first activated by ATP to form Pro-AMP and then transferred to the acceptor end of tRNA(Pro). As ProRS can inadvertently accommodate and process non-cognate amino acids such as alanine and cysteine, to avoid such errors it has two additional distinct editing activities against alanine. One activity is designated as 'pretransfer' editing and involves the tRNA(Pro)-independent hydrolysis of activated Ala-AMP. The other activity is designated 'posttransfer' editing and involves deacylation of mischarged Ala-tRNA(Pro). The misacylated Cys-tRNA(Pro) is not edited by ProRS. This chain is Proline--tRNA ligase, found in Thermosipho melanesiensis (strain DSM 12029 / CIP 104789 / BI429).